A 320-amino-acid chain; its full sequence is Elongation factor Ts (320 aa).

The segment at 82–85 (TDFV) is involved in Mg(2+) ion dislocation from EF-Tu.

It belongs to the EF-Ts family.

It is found in the cytoplasm. Associates with the EF-Tu.GDP complex and induces the exchange of GDP to GTP. It remains bound to the aminoacyl-tRNA.EF-Tu.GTP complex up to the GTP hydrolysis stage on the ribosome. This is Elongation factor Ts from Flavobacterium johnsoniae (strain ATCC 17061 / DSM 2064 / JCM 8514 / BCRC 14874 / CCUG 350202 / NBRC 14942 / NCIMB 11054 / UW101) (Cytophaga johnsonae).